The chain runs to 1705 residues: Intersectin-1 (1705 aa).

2 consecutive EH domains span residues 21–109 (ERAK…PVAM) and 220–309 (SRLK…SFRR). 2 EF-hand domains span residues 53–88 (LPQP…IKLK) and 253–288 (LPQS…IDVA). Ca(2+) contacts are provided by aspartate 66, asparagine 68, aspartate 70, arginine 72, glutamate 77, aspartate 266, aspartate 268, aspartate 270, lysine 272, and glutamate 277. 3 disordered regions span residues 322–355 (VSVD…KREN), 386–433 (RAEQ…ERRE), and 668–708 (RYKF…PPEP). Positions 325 to 697 (DQRLPEEPEE…VEKKPEIQEK (373 aa)) are KLERQ. The segment covering 339–355 (NADKKLPVTFEDKKREN) has biased composition (basic and acidic residues). Residues 350–687 (DKKRENFERG…KREESIQKCE (338 aa)) are a coiled coil. Residues 668-699 (RYKFQDEEKEKREESIQKCEVEKKPEIQEKPN) show a composition bias toward basic and acidic residues. Residues 732 to 793 (VKVVYYRALY…PANYAERMPE (62 aa)) form the SH3 1 domain. The segment covering 823-833 (AFTNTSTNSNN) has biased composition (low complexity). The segment at 823 to 851 (AFTNTSTNSNNWADFSSTWPTNNTDKVES) is disordered. A compositionally biased stretch (polar residues) spans 834–846 (WADFSSTWPTNNT). One can recognise an SH3 2 domain in the interval 897–955 (VEGLQAQALYPWRAKKDNHLNFNKNDVITVLEQQDMWWFGEVQGQKGWFPKSYVKLISG). The interval 959–978 (KSTSIDSTSSESPASLKRVS) is disordered. The span at 960-973 (STSIDSTSSESPAS) shows a compositional bias: low complexity. SH3 domains lie at 986-1044 (IQGE…PKDS), 1058-1122 (KKPE…LLSP), and 1139-1198 (PPTC…LTTD). Residues 1088-1111 (RKKNPGGWWEGELQARGKKRQIGW) carry the Bipartite nuclear localization signal; in isoform 2 motif. One can recognise a DH domain in the interval 1221–1407 (KRQGYIHELI…EELCSQVNEG (187 aa)). The PH domain occupies 1446-1555 (KFLHSGKLYK…WVQKIKAASE (110 aa)). One can recognise a C2 domain in the interval 1563 to 1679 (KKREKAYLVR…KKDQGSKGPV (117 aa)). Ca(2+) contacts are provided by aspartate 1651, serine 1654, and aspartate 1657.

In terms of assembly, binds epn1 and epn2. Ca(2+) is required as a cofactor.

It localises to the endomembrane system. Its subcellular location is the synapse. The protein localises to the synaptosome. It is found in the cell projection. The protein resides in the lamellipodium. It localises to the cell membrane. Its subcellular location is the membrane. The protein localises to the clathrin-coated pit. It is found in the recycling endosome. The protein resides in the cytoplasm. It localises to the nucleus envelope. Adapter protein that provides a link between the endocytic membrane traffic and the actin assembly machinery. Acts as a guanine nucleotide exchange factor (GEF) for cdc42, and thereby stimulates actin nucleation mediated by wasl and the arp2/3 complex. Involved in endocytosis of activated egfr, and probably also other growth factor receptors. The chain is Intersectin-1 (itsn1) from Xenopus laevis (African clawed frog).